The following is a 408-amino-acid chain: Glycoprotein 55 (408 aa).

The first 32 residues, 1–32, serve as a signal peptide directing secretion; the sequence is MEGPAFSKPLKDKINPWGPLIILGILIRAGVS. The Virion surface segment spans residues 33-385; it reads VQHDSPHQVF…LFNRSTWFTT (353 aa). N-linked (GlcNAc...) asparagine; by host glycans are attached at residues N43 and N58. The tract at residues 256-281 is disordered; the sequence is RPPQPPPPGAASIVPETAPPSQQPGT. 2 N-linked (GlcNAc...) asparagine; by host glycosylation sites follow: N297 and N329. Residues 335–371 are a coiled coil; it reads KEECCFYADHTGLVRDSMAKLRERLTQRQKLFESSQG. N-linked (GlcNAc...) asparagine; by host glycosylation is present at N378. Residues 386 to 406 traverse the membrane as a helical segment; the sequence is LIFTIIGPLIILLLILLFWTL. Residues 407 to 408 lie on the Intravirion side of the membrane; the sequence is HS.

The protein localises to the host endoplasmic reticulum membrane. Its subcellular location is the host cell membrane. It localises to the virion membrane. Functionally, envelope-like membrane glycoprotein. In Mus musculus (Mouse), this protein is Glycoprotein 55 (env).